We begin with the raw amino-acid sequence, 329 residues long: Delta-aminolevulinic acid dehydratase (329 aa).

Lys202 functions as the Schiff-base intermediate with substrate in the catalytic mechanism. 5-aminolevulinate is bound by residues Arg212 and Arg223. Glu239 provides a ligand contact to Mg(2+). Catalysis depends on Lys254, which acts as the Schiff-base intermediate with substrate. Residues Ser280 and Tyr319 each coordinate 5-aminolevulinate.

This sequence belongs to the ALAD family. In terms of assembly, homooctamer.

It carries out the reaction 2 5-aminolevulinate = porphobilinogen + 2 H2O + H(+). The protein operates within porphyrin-containing compound metabolism; protoporphyrin-IX biosynthesis; coproporphyrinogen-III from 5-aminolevulinate: step 1/4. Functionally, catalyzes an early step in the biosynthesis of tetrapyrroles. Binds two molecules of 5-aminolevulinate per subunit, each at a distinct site, and catalyzes their condensation to form porphobilinogen. The sequence is that of Delta-aminolevulinic acid dehydratase (hemB) from Mycobacterium leprae (strain TN).